We begin with the raw amino-acid sequence, 327 residues long: G protein pathway suppressor 2 (327 aa).

Positions 14 to 109 (MARALHRHIM…RRRKEQSDLT (96 aa)) form a coiled coil. The disordered stretch occupies residues 26–65 (RERKRQEEEEVDKMMEQKMKEEQERRKKKEMEERMSLEET). Residues Lys-45 and Lys-71 each participate in a glycyl lysine isopeptide (Lys-Gly) (interchain with G-Cter in SUMO1) cross-link. The interval 61–94 (SLEETKEQILKLEEKLLALQEEKHQLFLQLKKVL) is interaction with SUMO. Disordered regions lie at residues 177 to 208 (HGQF…SPSQ) and 253 to 327 (QKQM…FYHK). The segment covering 253-271 (QKQMEHANQQTGFSDSSSL) has biased composition (polar residues). Arg-312 carries the post-translational modification Asymmetric dimethylarginine. Positions 317–327 (QHSQNPRFYHK) are enriched in polar residues. The residue at position 323 (Arg-323) is an Asymmetric dimethylarginine; alternate. Position 323 is an omega-N-methylarginine; alternate (Arg-323).

Component of the N-Cor repressor complex, at least composed of NCOR1, NCOR2, HDAC3, TBL1X, TBL1R, CORO2A and GPS2. Interacts (when sumoylated at Lys-71) with TBL1X; leading to protect GPS2 from degradation by the proteasome. Interacts with UBE2N; leading to inhibit UBE2N/Ubc13 activity. Interacts with TRAF1. Interacts with TRAF2. Interacts with TRAF6. Interacts with PPARG (when in the liganded conformation). Interacts with (sumoylated) NR1H2; interaction with sumoylated NR1H2 and NR5A2 onto hepatic acute phase protein promoters prevents N-Cor corepressor complex dissociation. Interacts with (sumoylated) NR5A2; interaction with sumoylated NR1H2 and NR5A2 onto hepatic acute phase protein promoters prevents N-Cor corepressor complex dissociation. Interacts with NR1H3. Interacts with RFX4. Interacts with ANKRD26. As to quaternary structure, (Microbial infection) Interacts (via coiled coil domain) with hepatitis C virus (HCV) NS5A. Sumoylation regulates its subcellular location. Sumoylation at Lys-45 and Lys-71 regulates the shuttling between the cytoplasm and the nucleus. Sumoylation at Lys-71 is required for interaction with TBL1X. Sumoylated at Lys-45 and Lys-71 in mitochondrion. Desumoylation by SENP1 leads to relocation from the mitochondria to the nucleus. Post-translationally, ubiquitinated at the C-terminus by SIAH2; leading to its degradation by the proteasome. Interaction with TBL1X and methylation at Arg-323 protect GPS2 against ubiquitination and degradation. In terms of processing, methylated at Arg-312 and Arg-323 by PRMT6. Methylation at Arg-323 protects from degradation by the proteasome. In terms of tissue distribution, widely expressed.

The protein resides in the nucleus. Its subcellular location is the mitochondrion. It is found in the cytoplasm. It localises to the cytosol. Key regulator of inflammation, lipid metabolism and mitochondrion homeostasis that acts by inhibiting the activity of the ubiquitin-conjugating enzyme UBE2N/Ubc13, thereby inhibiting 'Lys-63'-linked ubiquitination. In the nucleus, can both acts as a corepressor and coactivator of transcription, depending on the context. Acts as a transcription coactivator in adipocytes by promoting the recruitment of PPARG to promoters: acts by inhibiting the activity of the ubiquitin-conjugating enzyme UBE2N/Ubc13, leading to stabilization of KDM4A and subsequent histone H3 'Lys-9' (H3K9) demethylation. Promotes cholesterol efflux by acting as a transcription coactivator. Acts as a regulator of B-cell development by inhibiting UBE2N/Ubc13, thereby restricting the activation of Toll-like receptors (TLRs) and B-cell antigen receptors (BCRs) signaling pathways. Acts as a key mediator of mitochondrial stress response: in response to mitochondrial depolarization, relocates from the mitochondria to the nucleus following desumoylation and specifically promotes expression of nuclear-encoded mitochondrial genes. Promotes transcription of nuclear-encoded mitochondrial genes by inhibiting UBE2N/Ubc13. Can also act as a corepressor as part of the N-Cor repressor complex by repressing active PPARG. Plays an anti-inflammatory role in macrophages and is required for insulin sensitivity by acting as a corepressor. Plays an anti-inflammatory role during the hepatic acute phase response by interacting with sumoylated NR1H2 and NR5A2 proteins, thereby preventing N-Cor corepressor complex dissociation. In the cytosol, also plays a non-transcriptional role by regulating insulin signaling and pro-inflammatory pathways. In the cytoplasm, acts as a negative regulator of inflammation by inhibiting the pro-inflammatory TNF-alpha pathway; acts by repressing UBE2N/Ubc13 activity. In the cytoplasm of adipocytes, restricts the activation of insulin signaling via inhibition of UBE2N/Ubc13-mediated ubiquitination of AKT. Able to suppress G-protein- and mitogen-activated protein kinase-mediated signal transduction. Acts as a tumor-suppressor in liposarcoma. Its function is as follows. (Microbial infection) Required for efficient replication of hepatitis C virus (HCV) by promoting the interaction between VAPA and HCV virus protein NS5A. The protein is G protein pathway suppressor 2 of Homo sapiens (Human).